A 514-amino-acid chain; its full sequence is Thymus-specific serine protease (514 aa).

Positions 1-24 are cleaved as a signal peptide; it reads MAVWLAQWLGPLLLVSLWGLLAPA. N-linked (GlcNAc...) asparagine glycans are attached at residues asparagine 70 and asparagine 172. Serine 185 serves as the catalytic Charge relay system. Asparagine 321 carries N-linked (GlcNAc...) asparagine glycosylation. Active-site charge relay system residues include aspartate 447 and histidine 472.

Belongs to the peptidase S28 family. As to expression, expressed predominantly in cortical thymic epithelial cells.

It localises to the cytoplasmic vesicle. Its function is as follows. Protease that may play a role in T-cell development. This Homo sapiens (Human) protein is Thymus-specific serine protease (PRSS16).